The following is a 109-amino-acid chain: Small ribosomal subunit protein bS6 (109 aa).

Belongs to the bacterial ribosomal protein bS6 family.

Functionally, binds together with bS18 to 16S ribosomal RNA. The protein is Small ribosomal subunit protein bS6 of Anaplasma marginale (strain St. Maries).